We begin with the raw amino-acid sequence, 249 residues long: MKTVFILISMLFPVAVMAQKSVKISDDISITQLSDKVYTYVSLAEIEGWGMVPSNGMIVINNHQAALLDTPINDAQTEMLVNWVTDSLHAKVTTFIPNHWHGDCIGGLGYLQRKGVQSYANQMTIDLAKEKGLPVPEHGFTDSLTVSLDGMPLQCYYLGGGHATDNIVVWLPTENILFGGCMLKDNQATSIGNISDADVTAWPKTLDKVKAKFPSARYVVPGHGDYGGTELIEHTKQIVNQYIESTSKP.

The first 18 residues, 1–18, serve as a signal peptide directing secretion; that stretch reads MKTVFILISMLFPVAVMA. Zn(2+) is bound by residues His-99, His-101, Asp-103, His-162, and Cys-181. Lys-184 and Asn-193 together coordinate substrate. His-223 provides a ligand contact to Zn(2+).

The protein belongs to the metallo-beta-lactamase superfamily. Class-B beta-lactamase family. In terms of assembly, monomer. The cofactor is Zn(2+).

The protein localises to the periplasm. The enzyme catalyses a beta-lactam + H2O = a substituted beta-amino acid. Its activity is regulated as follows. Competitively inhibited by 4-morpholineethanesulfonic acid (MES), SB236050 and biphenyl tetrazoles (BPTs). Also inhibited by chelating agents such as EDTA and 1,10-phenanthroline. CcrA is not susceptible to inactivation by the beta-lactamase-blocking agents clavulanic acid or tazobactam. Its function is as follows. Confers resistance to the different beta-lactams antibiotics (penicillin, cephalosporin and carbapenem) via the hydrolysis of the beta-lactam ring. In Bacteroides fragilis, this protein is Metallo-beta-lactamase type 2.